The primary structure comprises 137 residues: MTGAASQQQTETPLYGERAIDEAELICFDNPRPGRAYEVSIELPEFTCKCPFSGYPDFAVLRLIYQPGPRVVELKAIKLYVNSYRDRSISHEEVSNRIVDDLVAACDPVWLQLEADFNPRGNVHTVVRVSHGTRQPC.

C50 functions as the Thioimide intermediate in the catalytic mechanism. The active-site Proton donor is D57. Substrate is bound by residues 72–74 (VEL) and 91–92 (HE).

This sequence belongs to the GTP cyclohydrolase I family. QueF type 1 subfamily.

Its subcellular location is the cytoplasm. It catalyses the reaction 7-aminomethyl-7-carbaguanine + 2 NADP(+) = 7-cyano-7-deazaguanine + 2 NADPH + 3 H(+). It functions in the pathway tRNA modification; tRNA-queuosine biosynthesis. In terms of biological role, catalyzes the NADPH-dependent reduction of 7-cyano-7-deazaguanine (preQ0) to 7-aminomethyl-7-deazaguanine (preQ1). This Synechococcus sp. (strain CC9902) protein is NADPH-dependent 7-cyano-7-deazaguanine reductase.